Consider the following 156-residue polypeptide: Translationally controlled tumor protein 2 (156 aa).

In terms of domain architecture, TCTP spans 1 to 156 (MLVYQDILTG…LAYGLKEIKC (156 aa)).

This sequence belongs to the TCTP family. Expressed in stems, cauline leaves, minor veins of rosette leaves, roots, lateral root primordia, vascular tissues of petioles and inflorescences, base of siliques, papillae and ovules. Not detected in root meristems, anthers or seeds. Expressed in stomata, trichomes and root cortex.

The protein localises to the nucleus. Its subcellular location is the cytoplasm. Functionally, regulates proliferation. Induces whole plant regeneration when expressed in heterologous systems. Involved in root growth and lateral root development, with a probable role in cell reprogramming. The long-distance transport of TCTP RNA and/or protein in plants may have an important role in regulation of growth and development. The polypeptide is Translationally controlled tumor protein 2 (Arabidopsis thaliana (Mouse-ear cress)).